Reading from the N-terminus, the 291-residue chain is Transmembrane O-methyltransferase (291 aa).

A helical membrane pass occupies residues 31-51; that stretch reads VGTMSPAIALAFLPLVVTLLV. S-adenosyl-L-methionine-binding positions include Glu137, 139–140, Ser145, Glu163, and Ser193; that span reads GT.

Belongs to the class I-like SAM-binding methyltransferase superfamily. Cation-dependent O-methyltransferase family. Interacts with LHFPL5, PCDH15, TMC1, TMC2 and TMIE. Interacts directly with TMC1. The interaction of TOMT with TMC1 and TMC2 is required for the transportation of TMC1/2 into the stereocilia of hair cells.

Its subcellular location is the membrane. It localises to the cytoplasm. The protein localises to the endoplasmic reticulum. The catalysed reaction is a catechol + S-adenosyl-L-methionine = a guaiacol + S-adenosyl-L-homocysteine + H(+). Functionally, catalyzes the O-methylation, and thereby the inactivation, of catecholamine neurotransmitters and catechol hormones. Required for auditory function. Component of the cochlear hair cell's mechanotransduction (MET) machinery. Involved in the assembly of the asymmetric tip-link MET complex. Required for transportation of TMC1 and TMC2 proteins into the mechanically sensitive stereocilia of the hair cells. The function in MET is independent of the enzymatic activity. In Homo sapiens (Human), this protein is Transmembrane O-methyltransferase.